The sequence spans 422 residues: MLNHLKNVDPEVYSAISKEFKRQEEHLEMIASENYTSQAVMEAQGSVLTNKYAEGLPHKRYYGGCEYVDIVEDLAIERLKKLFGAEYANVQPHSGSQANQAVFFSQLQPGDTILGMRLDHGGHLTHGAKVNVSGIVFNSVQYGLNPQTELIDYDEVYRLAKEYKPKMIVAGASAYSRVIDFAKFREIADEVGALLMVDMAHYAGLIAGGVYPNPVPYAQFVTSTTHKTLRGPRGGVILCKSEYAKDIDKWVFPRLQGGPLMHVIAAKAVAFGEALTEDFKKYAEQVVKNARALAEELMAEGLRIVSGGTDSHMMLVDLRPLNVKGNQAEEALGKANITVNKNAIPFDPEKPTVTSGIRLGTAALTTRGMKENDMRRIAKNIVKVLKNLDNEKVIQEARDDVLSLCSSYPLYPDWFKDYGYGE.

Residues leucine 118 and glycine 122–leucine 124 each bind (6S)-5,6,7,8-tetrahydrofolate. Lysine 227 is subject to N6-(pyridoxal phosphate)lysine. Glutamate 242 provides a ligand contact to (6S)-5,6,7,8-tetrahydrofolate.

It belongs to the SHMT family. Homodimer. Pyridoxal 5'-phosphate is required as a cofactor.

Its subcellular location is the cytoplasm. The enzyme catalyses (6R)-5,10-methylene-5,6,7,8-tetrahydrofolate + glycine + H2O = (6S)-5,6,7,8-tetrahydrofolate + L-serine. The protein operates within one-carbon metabolism; tetrahydrofolate interconversion. It functions in the pathway amino-acid biosynthesis; glycine biosynthesis; glycine from L-serine: step 1/1. Functionally, catalyzes the reversible interconversion of serine and glycine with tetrahydrofolate (THF) serving as the one-carbon carrier. This reaction serves as the major source of one-carbon groups required for the biosynthesis of purines, thymidylate, methionine, and other important biomolecules. Also exhibits THF-independent aldolase activity toward beta-hydroxyamino acids, producing glycine and aldehydes, via a retro-aldol mechanism. In Sulfurihydrogenibium sp. (strain YO3AOP1), this protein is Serine hydroxymethyltransferase.